The sequence spans 366 residues: Short-chain collagen C4 (366 aa).

The segment covering 1–14 (DTGPQGPQGVAGPP) has biased composition (low complexity). 2 triple-helical region regions span residues 1–23 (DTGP…KGDK) and 40–210 (GPPG…NGAV). Positions 1–207 (DTGPQGPQGV…QGPQGAPGSN (207 aa)) are disordered. A compositionally biased stretch (pro residues) spans 28-45 (YPPPPTCPTCPAGPPGAP). 2 stretches are compositionally biased toward low complexity: residues 75-90 (PGND…PGYD) and 99-110 (TGAPGPQGPKGD). The segment covering 138–149 (DGQDGAKGDKGD) has biased composition (basic and acidic residues). Low complexity-rich tracts occupy residues 150–168 (QGPA…QGPA) and 189–201 (QGPK…QGPQ).

The protein resides in the secreted. Its subcellular location is the extracellular space. It localises to the extracellular matrix. The sequence is that of Short-chain collagen C4 from Ephydatia muelleri (Mueller's freshwater sponge).